We begin with the raw amino-acid sequence, 723 residues long: F-box protein MAX2 homolog B (723 aa).

Residues 2–55 (AKTPIPFTTLNDLPDVILSNIIAAVSDTRSRNATALVCHKWLVLERSTRTSLTL) form the F-box domain.

As to quaternary structure, part of a putative SCF (SKP1/Cullin/F-box) ubiquitin ligase complex. Interacts with KAI2IA in the presence of (-)-germacrene D. As to expression, mainly expressed in fully expanded leaves, lateral roots, axillary and shoot apex, and, to a lower extent, in internodes and nodes.

The protein resides in the nucleus. It is found in the cytoplasm. Component of SCF(ASK-cullin-F-box) E3 ubiquitin ligase complexes, which may mediate the ubiquitination and subsequent proteasomal degradation of target proteins. Is necessary for responses to strigolactones and may be involved in the ubiquitin-mediated degradation of specific proteins that activate axillary growth. Targets probably SMAX1A to degradation upon the formation of an E3 SCF ubiquitin ligase complex (ASK-cullin-F-box) containing MAX2B and KAI2IA in response to (-)-germacrene D in the stigma. The polypeptide is F-box protein MAX2 homolog B (Petunia hybrida (Petunia)).